A 150-amino-acid polypeptide reads, in one-letter code: CCAAT/enhancer-binding protein gamma (150 aa).

Residue Lys-3 forms a Glycyl lysine isopeptide (Lys-Gly) (interchain with G-Cter in SUMO2) linkage. The interval 27-94 (GLQQVPQLVP…QKAQDTLQRV (68 aa)) is disordered. The span at 28–37 (LQQVPQLVPA) shows a compositional bias: low complexity. Over residues 56–72 (SPMDRNSDEYRQRRERN) the composition is skewed to basic and acidic residues. One can recognise a bZIP domain in the interval 62–125 (SDEYRQRRER…SVLKDLFLEH (64 aa)). Residues 66-93 (RQRRERNNMAVKKSRLKSKQKAQDTLQR) are basic motif. The tract at residues 97-118 (LKEENERLEAKIKLLTKELSVL) is leucine-zipper. A disordered region spans residues 129 to 150 (LADNVQPISTETTATNSDNPGQ). Residues 134-150 (QPISTETTATNSDNPGQ) show a composition bias toward polar residues.

It belongs to the bZIP family. C/EBP subfamily. As to quaternary structure, binds DNA as a dimer and can form stable heterodimers with CEBPA. Can form stable heterodimers with CEBPB. Interacts with ZNF638; this interaction increases transcriptional activation. In terms of tissue distribution, ubiquitous.

It localises to the nucleus. Its function is as follows. Transcription factor that binds to the promoter and the enhancer regions of target genes. Binds to the promoter and the enhancer of the immunoglobulin heavy chain. Binds to GPE1, a cis-acting element in the G-CSF gene promoter. Binds to the enhancer element PRE-I (positive regulatory element-I) of the IL-4 gene. Binds to the promoter and the enhancer of the alpha-1-fetoprotein gene. The polypeptide is CCAAT/enhancer-binding protein gamma (Cebpg) (Mus musculus (Mouse)).